We begin with the raw amino-acid sequence, 151 residues long: Probable desiccation-related protein LEA14 (151 aa).

Belongs to the LEA type 2 family.

In Arabidopsis thaliana (Mouse-ear cress), this protein is Probable desiccation-related protein LEA14 (LEA14).